The following is a 397-amino-acid chain: Acetate kinase (397 aa).

Residue Asn7 participates in Mg(2+) binding. Position 14 (Lys14) interacts with ATP. Position 91 (Arg91) interacts with substrate. Residue Asp148 is the Proton donor/acceptor of the active site. Residues 208-212 (HIGNG), 283-285 (DMR), and 331-335 (GVGEN) contribute to the ATP site. A Mg(2+)-binding site is contributed by Glu384.

Belongs to the acetokinase family. Homodimer. It depends on Mg(2+) as a cofactor. Mn(2+) is required as a cofactor.

It localises to the cytoplasm. It carries out the reaction acetate + ATP = acetyl phosphate + ADP. It functions in the pathway metabolic intermediate biosynthesis; acetyl-CoA biosynthesis; acetyl-CoA from acetate: step 1/2. Its function is as follows. Catalyzes the formation of acetyl phosphate from acetate and ATP. Can also catalyze the reverse reaction. This chain is Acetate kinase, found in Azobacteroides pseudotrichonymphae genomovar. CFP2.